The chain runs to 372 residues: Adaptive-response sensory kinase SasA (372 aa).

Positions 147–360 (MVAHELRTPL…CFHFTVPVWQ (214 aa)) constitute a Histidine kinase domain. Histidine 150 is subject to Phosphohistidine; by autocatalysis.

In terms of assembly, homooligomerizes. Interacts with KaiC. Participates in the KaiBC complex, whose core is composed of a KaiC homohexamer and 6 KaiB.

It carries out the reaction ATP + protein L-histidine = ADP + protein N-phospho-L-histidine.. Member of the two-component regulatory system SasA/RpaA involved in genome-wide circadian gene expression. One of several clock output pathways. Participates in the Kai clock protein complex, the main circadian regulator in cyanobacteria, via its interaction with KaiC. KaiC enhances the autophosphorylation activity of SasA, which then transfers its phosphate group to RpaA to activate it. In addition to its output function, recruits fold-shifted KaiB (KaiB(fs)) to KaiC to cooperatively form the KaiB(6):KaiC(6) complex (independent of SasA kinase activity). Required for robustness of the circadian rhythm of gene expression and is involved in clock output, also required for adaptation to light/dark cycles. This Prochlorococcus marinus (strain MIT 9215) protein is Adaptive-response sensory kinase SasA.